The following is a 438-amino-acid chain: Chromosomal replication initiator protein DnaA (438 aa).

The tract at residues 1–74 (MNEINKIWQK…SFYQITGSQV (74 aa)) is domain I, interacts with DnaA modulators. The interval 74 to 100 (VEVKYIITGKEHETGLIEEKKQVIKKG) is domain II. The tract at residues 101 to 317 (NLNPKYTFDT…GSLIKLCAYT (217 aa)) is domain III, AAA+ region. Positions 145, 147, 148, and 149 each coordinate ATP. The segment at 318-438 (SLTKVPISMD…DSIIKKVTGQ (121 aa)) is domain IV, binds dsDNA.

This sequence belongs to the DnaA family. Oligomerizes as a right-handed, spiral filament on DNA at oriC.

It is found in the cytoplasm. Plays an essential role in the initiation and regulation of chromosomal replication. ATP-DnaA binds to the origin of replication (oriC) to initiate formation of the DNA replication initiation complex once per cell cycle. Binds the DnaA box (a 9 base pair repeat at the origin) and separates the double-stranded (ds)DNA. Forms a right-handed helical filament on oriC DNA; dsDNA binds to the exterior of the filament while single-stranded (ss)DNA is stabiized in the filament's interior. The ATP-DnaA-oriC complex binds and stabilizes one strand of the AT-rich DNA unwinding element (DUE), permitting loading of DNA polymerase. After initiation quickly degrades to an ADP-DnaA complex that is not apt for DNA replication. Binds acidic phospholipids. The protein is Chromosomal replication initiator protein DnaA of Thermodesulfovibrio yellowstonii (strain ATCC 51303 / DSM 11347 / YP87).